We begin with the raw amino-acid sequence, 793 residues long: E3 ubiquitin-protein ligase UHRF1 (793 aa).

The 78-residue stretch at 1–78 folds into the Ubiquitin-like domain; sequence MWIQVRTMDG…IQLLVRQSLV (78 aa). 4 positions are modified to phosphoserine: Ser-76, Ser-91, Ser-95, and Ser-165. A disordered region spans residues 82-124; that stretch reads STKERDSELSDTDSGCCLGQSESDKSSTHGEAAAETDSRPADE. Tudor-like regions lie at residues 133–209 and 216–283; these read GLYK…ARAR and DLEV…IERP. Lys-279 is covalently cross-linked (Glycyl lysine isopeptide (Lys-Gly) (interchain with G-Cter in SUMO2)). Phosphoserine is present on Ser-287. The tract at residues 296-301 is linker; sequence RKSGPS. Ser-298 carries the phosphoserine; by PKA modification. The PHD-type zinc finger occupies 310-366; sequence NRLCRVCACHLCGGRQDPDKQLMCDECDMAFHIYCLDPPLSSVPSEDEWYCPECRND. Histone H3R2me0 binding stretches follow at residues 333–337 and 353–355; these read CDECD and PSE. Residue Ser-368 is modified to Phosphoserine. Lys-385 is covalently cross-linked (Glycyl lysine isopeptide (Lys-Gly) (interchain with G-Cter in SUMO2)). Lys-399 carries the post-translational modification N6-acetyllysine. One can recognise a YDG domain in the interval 419-582; it reads GPIPGIPVGT…FLVWRYLLRR (164 aa). The tract at residues 445–446 is required to promote base flipping; sequence HV. DNA contacts are provided by residues 463-464 and Asp-469; that span reads AG. 2 required for formation of a 5-methylcytosine-binding pocket regions span residues 466–469 and 478–481; these read YEDD and YTGS. Lys-546 bears the N6-acetyllysine; alternate mark. A Glycyl lysine isopeptide (Lys-Gly) (interchain with G-Cter in SUMO2); alternate cross-link involves residue Lys-546. Residues 618-629 show a composition bias toward basic and acidic residues; that stretch reads REREKENSKREE. Positions 618–673 are disordered; sequence REREKENSKREEEEQQEGGFASPRTGKGKWKRKSAGGGPSRAGSPRRTSKKTKVEP. Residue Ser-639 is modified to Phosphoserine; by CDK1. Ser-651 bears the Phosphoserine mark. Lys-670 is covalently cross-linked (Glycyl lysine isopeptide (Lys-Gly) (interchain with G-Cter in SUMO2)). 2 positions are modified to phosphoserine: Ser-707 and Ser-709. The RING-type zinc finger occupies 724-763; sequence CICCQELVFRPITTVCQHNVCKDCLDRSFRAQVFSCPACR.

Interacts with DNMT3A and DNMT3B. Interacts with DNMT1; the interaction is direct. Interacts with USP7; leading to its deubiquitination. Interacts with histone H3. Interacts with HDAC1, but not with HDAC2. Interacts with BLTP3A. Interacts with PML. Interacts with EHMT2. Binds hemimethylated CpG containing oligonucleotides. Interacts with ZNF263; recruited to the SIX3 promoter along with other proteins involved in chromatin modification and transcriptional corepression where it contributes to transcriptional repression. Interacts with UHRF2. Interacts with FANCD2. Interacts with TET1 isoform 2; this interaction induces the recruitment of TET1 isoform 2 to replicating heterochromatin. Post-translationally, phosphorylation at Ser-298 of the linker region decreases the binding to H3K9me3. Phosphorylation at Ser-639 by CDK1 during M phase impairs interaction with USP7, preventing deubiquitination and leading to degradation by the proteasome. Ubiquitinated; which leads to proteasomal degradation. Autoubiquitinated; interaction with USP7 leads to deubiquitination and prevents degradation. Ubiquitination and degradation takes place during M phase, when phosphorylation at Ser-639 prevents interaction with USP7 and subsequent deubiquitination. Polyubiquitination may be stimulated by DNA damage. In terms of tissue distribution, expressed in thymus, bone marrow, testis, lung and heart. Overexpressed in breast cancer.

It localises to the nucleus. The catalysed reaction is S-ubiquitinyl-[E2 ubiquitin-conjugating enzyme]-L-cysteine + [acceptor protein]-L-lysine = [E2 ubiquitin-conjugating enzyme]-L-cysteine + N(6)-ubiquitinyl-[acceptor protein]-L-lysine.. It participates in protein modification; protein ubiquitination. Its function is as follows. Multidomain protein that acts as a key epigenetic regulator by bridging DNA methylation and chromatin modification. Specifically recognizes and binds hemimethylated DNA at replication forks via its YDG domain and recruits DNMT1 methyltransferase to ensure faithful propagation of the DNA methylation patterns through DNA replication. In addition to its role in maintenance of DNA methylation, also plays a key role in chromatin modification: through its tudor-like regions and PHD-type zinc fingers, specifically recognizes and binds histone H3 trimethylated at 'Lys-9' (H3K9me3) and unmethylated at 'Arg-2' (H3R2me0), respectively, and recruits chromatin proteins. Enriched in pericentric heterochromatin where it recruits different chromatin modifiers required for this chromatin replication. Also localizes to euchromatic regions where it negatively regulates transcription possibly by impacting DNA methylation and histone modifications. Has E3 ubiquitin-protein ligase activity by mediating the ubiquitination of target proteins such as histone H3 and PML. It is still unclear how E3 ubiquitin-protein ligase activity is related to its role in chromatin in vivo. Plays a role in DNA repair by cooperating with UHRF2 to ensure recruitment of FANCD2 to interstrand cross-links (ICLs) leading to FANCD2 activation. Acts as a critical player of proper spindle architecture by catalyzing the 'Lys-63'-linked ubiquitination of KIF11, thereby controlling KIF11 localization on the spindle. The polypeptide is E3 ubiquitin-protein ligase UHRF1 (UHRF1) (Homo sapiens (Human)).